Consider the following 123-residue polypeptide: UPF0738 protein BCE33L1094 (123 aa).

The protein belongs to the UPF0738 family.

The protein is UPF0738 protein BCE33L1094 of Bacillus cereus (strain ZK / E33L).